The following is a 62-amino-acid chain: UPF0370 protein plu2724 (62 aa).

A helical transmembrane segment spans residues 3–23 (WLADYWWIILILLVGVLLNAI). A disordered region spans residues 36-62 (DNKPELPPHRDLNSKWDDEDDWPQKKP).

This sequence belongs to the UPF0370 family.

It is found in the cell membrane. The polypeptide is UPF0370 protein plu2724 (Photorhabdus laumondii subsp. laumondii (strain DSM 15139 / CIP 105565 / TT01) (Photorhabdus luminescens subsp. laumondii)).